Consider the following 920-residue polypeptide: 2-oxoglutarate dehydrogenase E1 component (920 aa).

This sequence belongs to the alpha-ketoglutarate dehydrogenase family. As to quaternary structure, homodimer. Part of the 2-oxoglutarate dehydrogenase (OGDH) complex composed of E1 (2-oxoglutarate dehydrogenase), E2 (dihydrolipoamide succinyltransferase) and E3 (dihydrolipoamide dehydrogenase); the complex contains multiple copies of the three enzymatic components (E1, E2 and E3). Thiamine diphosphate is required as a cofactor.

The enzyme catalyses N(6)-[(R)-lipoyl]-L-lysyl-[protein] + 2-oxoglutarate + H(+) = N(6)-[(R)-S(8)-succinyldihydrolipoyl]-L-lysyl-[protein] + CO2. E1 component of the 2-oxoglutarate dehydrogenase (OGDH) complex which catalyzes the decarboxylation of 2-oxoglutarate, the first step in the conversion of 2-oxoglutarate to succinyl-CoA and CO(2). The protein is 2-oxoglutarate dehydrogenase E1 component of Leptospira interrogans serogroup Icterohaemorrhagiae serovar copenhageni (strain Fiocruz L1-130).